Consider the following 515-residue polypeptide: Adenine DNA glycosylase (515 aa).

Over residues 1 to 24 the composition is skewed to basic residues; that stretch reads MKKLQASVRSHKKQPANHKRRRTR. Residues 1 to 38 are disordered; the sequence is MKKLQASVRSHKKQPANHKRRRTRALSSSQAKPSSLDG. The Proton donor/acceptor role is filled by Glu105. [4Fe-4S] cluster contacts are provided by Cys261, Cys268, Cys271, and Cys277. Residues 335-466 form the Nudix hydrolase domain; that stretch reads PREEYSATCV…AMKKVFRMYE (132 aa). Positions 376-398 match the Nudix box motif; the sequence is VTLEPSEQHQHKALLQELQRWCG. The interval 468–494 is disordered; it reads HRQGTRKGSKRSQVCPPSSRKKPSLGQ.

The protein belongs to the Nth/MutY family. The cofactor is [4Fe-4S] cluster. In terms of tissue distribution, expressed in heart, lung, liver, intestine, brain and thymus.

The protein resides in the nucleus. The protein localises to the mitochondrion. The enzyme catalyses Hydrolyzes free adenine bases from 7,8-dihydro-8-oxoguanine:adenine mismatched double-stranded DNA, leaving an apurinic site.. Functionally, involved in oxidative DNA damage repair. Initiates repair of A*oxoG to C*G by removing the inappropriately paired adenine base from the DNA backbone. Possesses both adenine and 2-OH-A DNA glycosylase activities. This is Adenine DNA glycosylase (Mutyh) from Mus musculus (Mouse).